Consider the following 495-residue polypeptide: Taxoid 2-alpha-hydroxylase (495 aa).

The chain crosses the membrane as a helical span at residues 17-37 (LQSSAILLTVVSGIIVIVILL). Cys441 serves as a coordination point for heme.

It belongs to the cytochrome P450 family.

Its subcellular location is the microsome membrane. It carries out the reaction taxusin + reduced [NADPH--hemoprotein reductase] + O2 = 2alpha-hydroxytaxusin + oxidized [NADPH--hemoprotein reductase] + H2O + H(+). It catalyses the reaction 7beta-hydroxytaxusin + reduced [NADPH--hemoprotein reductase] + O2 = 2alpha,7beta-dihydroxytaxusin + oxidized [NADPH--hemoprotein reductase] + H2O + H(+). It functions in the pathway alkaloid biosynthesis; taxol biosynthesis. Catalyzes the conversion of taxusin to 2-alpha-hydroxytaxusin in taxol biosynthesis. Catalyzes the conversion of 7-beta-hydroxytaxusin to 2-alpha-7-beta-hydroxytaxusin in taxol biosynthesis. The polypeptide is Taxoid 2-alpha-hydroxylase (Taxus canadensis (Canadian yew)).